The primary structure comprises 252 residues: Phosphate import ATP-binding protein PstB (252 aa).

The ABC transporter domain maps to 5-247; sequence MRGQDVKVFY…PKEQRTQDYI (243 aa). 37–44 lines the ATP pocket; that stretch reads GPSGCGKS.

It belongs to the ABC transporter superfamily. Phosphate importer (TC 3.A.1.7) family. The complex is composed of two ATP-binding proteins (PstB), two transmembrane proteins (PstC and PstA) and a solute-binding protein (PstS).

Its subcellular location is the cell inner membrane. It catalyses the reaction phosphate(out) + ATP + H2O = ADP + 2 phosphate(in) + H(+). Part of the ABC transporter complex PstSACB involved in phosphate import. Responsible for energy coupling to the transport system. The sequence is that of Phosphate import ATP-binding protein PstB from Bartonella henselae (strain ATCC 49882 / DSM 28221 / CCUG 30454 / Houston 1) (Rochalimaea henselae).